Consider the following 439-residue polypeptide: Mitochondrial distribution and morphology protein 12 (439 aa).

Residues 1 to 439 (MSIDVNWRFA…VYPSFWTFLI (439 aa)) enclose the SMP-LTD domain. Disordered regions lie at residues 70–103 (YEED…LNEP), 185–274 (GWSD…PPRM), and 354–386 (PEQQ…RHGG). Residues 78–91 (TSDASEERGEEHSS) are compositionally biased toward basic and acidic residues. A compositionally biased stretch (polar residues) spans 215–245 (DTSNSTSRPSTANTLPSHPSGSSKNSGQAAT). 2 stretches are compositionally biased toward basic and acidic residues: residues 247-261 (RNDH…HLED) and 362-371 (SAGDDHRPQS).

It belongs to the MDM12 family. As to quaternary structure, component of the ER-mitochondria encounter structure (ERMES) or MDM complex, composed of mmm1, mdm10, mdm12 and mdm34. A mmm1 homodimer associates with one molecule of mdm12 on each side in a pairwise head-to-tail manner, and the SMP-LTD domains of mmm1 and mdm12 generate a continuous hydrophobic tunnel for phospholipid trafficking.

It is found in the mitochondrion outer membrane. It localises to the endoplasmic reticulum membrane. Component of the ERMES/MDM complex, which serves as a molecular tether to connect the endoplasmic reticulum (ER) and mitochondria. Components of this complex are involved in the control of mitochondrial shape and protein biogenesis, and function in nonvesicular lipid trafficking between the ER and mitochondria. Mdm12 is required for the interaction of the ER-resident membrane protein mmm1 and the outer mitochondrial membrane-resident beta-barrel protein mdm10. The mdm12-mmm1 subcomplex functions in the major beta-barrel assembly pathway that is responsible for biogenesis of all mitochondrial outer membrane beta-barrel proteins, and acts in a late step after the SAM complex. The mdm10-mdm12-mmm1 subcomplex further acts in the TOM40-specific pathway after the action of the mdm12-mmm1 complex. Essential for establishing and maintaining the structure of mitochondria and maintenance of mtDNA nucleoids. The protein is Mitochondrial distribution and morphology protein 12 of Aspergillus fumigatus (strain CBS 144.89 / FGSC A1163 / CEA10) (Neosartorya fumigata).